Here is a 596-residue protein sequence, read N- to C-terminus: Fc receptor-like protein 5 (596 aa).

Positions 1–26 (MSGSFSPCVVFTQMWLTLLVVTPVNG) are cleaved as a signal peptide. Topologically, residues 27 to 496 (QHEAAQQSVV…MTKNRSVPMA (470 aa)) are extracellular. 5 consecutive Ig-like C2-type domains span residues 34–115 (SVVS…VEFS), 106–199 (PSMH…NTVV), 207–294 (PRPV…TAFI), 296–384 (PVQR…SFVS), and 398–483 (PVLT…IRIS). Disulfide bonds link Cys55–Cys99, Cys137–Cys181, and Cys228–Cys277. The N-linked (GlcNAc...) asparagine glycan is linked to Asn324. Cystine bridges form between Cys325–Cys373 and Cys419–Cys466. N-linked (GlcNAc...) asparagine glycosylation occurs at Asn436. A helical membrane pass occupies residues 497–517 (AGITVGLLIMAVGVFLFYCWF). Residues 518-596 (SRKAGGKPTS…RSRCQMAEKK (79 aa)) are Cytoplasmic-facing. 2 disordered regions span residues 522 to 544 (GGKPTSDDSRNPSDSEPQEPTYY) and 561 to 596 (EENVIYTEVRRTQPRQKHADQESESPRSRCQMAEKK). Positions 577–596 (KHADQESESPRSRCQMAEKK) are enriched in basic and acidic residues.

Interacts with CR2. Interacts with CD19. In terms of processing, phosphorylated on cytoplasmic tyrosines; required for interaction with protein tyrosine phosphatases and protein tyrosine kinases. Preferentially expressed in marginal zone B cells.

The protein resides in the cell membrane. In terms of biological role, plays an important role in B-cell response to antigen that acts both as a negative or positive coreceptor. Inhibits B-cell receptor (BCR) signaling in the absence of CR2 stimulation but engagement with CR2 and the BCR lead to a superior calcium response compared to CR2 and BCR costimulation. May be involved in B-cell development and differentiation in peripheral lymphoid organs and may be useful markers of B-cell stages. May have an immunoregulatory role in marginal zone B-cells. May play a role in fertilization. The sequence is that of Fc receptor-like protein 5 (Fcrl5) from Mus musculus (Mouse).